We begin with the raw amino-acid sequence, 285 residues long: Nucleotide-binding protein Psyr_4150 (285 aa).

8–15 (GRSGSGKS) is a binding site for ATP. Residue 60-63 (DARN) coordinates GTP.

Belongs to the RapZ-like family.

Its function is as follows. Displays ATPase and GTPase activities. In Pseudomonas syringae pv. syringae (strain B728a), this protein is Nucleotide-binding protein Psyr_4150.